We begin with the raw amino-acid sequence, 381 residues long: Chorismate synthase (381 aa).

Positions 41 and 47 each coordinate NADP(+). FMN is bound by residues 127 to 129 (RAS), 247 to 248 (QA), G291, 306 to 310 (KPIPT), and R332.

The protein belongs to the chorismate synthase family. In terms of assembly, homotetramer. The cofactor is FMNH2.

It carries out the reaction 5-O-(1-carboxyvinyl)-3-phosphoshikimate = chorismate + phosphate. Its pathway is metabolic intermediate biosynthesis; chorismate biosynthesis; chorismate from D-erythrose 4-phosphate and phosphoenolpyruvate: step 7/7. Catalyzes the anti-1,4-elimination of the C-3 phosphate and the C-6 proR hydrogen from 5-enolpyruvylshikimate-3-phosphate (EPSP) to yield chorismate, which is the branch point compound that serves as the starting substrate for the three terminal pathways of aromatic amino acid biosynthesis. This reaction introduces a second double bond into the aromatic ring system. This Anaeromyxobacter dehalogenans (strain 2CP-1 / ATCC BAA-258) protein is Chorismate synthase.